Reading from the N-terminus, the 419-residue chain is MNKHQKPVLTGQRFKTRKRDEKEKFEPTVFRDTLVQGLNEAGDDLEAVAKFLDSTGSRLDYRRYADTLFDILVAGSMLAPGGTRIDDGDKTKMTNHCVFSANEDHETIRNYAQVFNKLIRRYKYLEKAFEDEMKKLLLFLKAFSETEQTKLAMLSGILLGNGTLPATILTSLFTDSLVKEGIAASFAVKLFKAWMAEKDANSVTSSLRKANLDKRLLELFPVNRQSVDHFAKYFTDAGLKELSDFLRVQQSLGTRKELQKELQERLSQECPIKEVVLYVKEEMKRNDLPETAVIGLLWTCIMNAVEWNKKEELVAEQALKHLKQYAPLLAVFSSQGQSELILLQKVQEYCYDNIHFMKAFQKIVVLFYKADVLSEEAILKWYKEAHVAKGKSVFLDQMKKFVEWLQNAEEESESEGEGN.

Residues 1–22 (MNKHQKPVLTGQRFKTRKRDEK) form a disordered region. K117 carries the post-translational modification N6-acetyllysine. The region spanning 248 to 415 (VQQSLGTRKE…QNAEEESESE (168 aa)) is the W2 domain. A phosphoserine mark is found at S412 and S414.

This sequence belongs to the BZW family. In terms of assembly, interacts with EIF3E, EIF2S2 and EIF3C.

It is found in the cytoplasm. Its function is as follows. Translation initiation regulator which represses non-AUG initiated translation and repeat-associated non-AUG (RAN) initiated translation by acting as a competitive inhibitor of eukaryotic translation initiation factor 5 (EIF5) function. Increases the accuracy of translation initiation by impeding EIF5-dependent translation from non-AUG codons by competing with it for interaction with EIF2S2 within the 43S pre-initiation complex (PIC) in an EIF3C-binding dependent manner. The sequence is that of eIF5-mimic protein 1 (BZW2) from Macaca fascicularis (Crab-eating macaque).